A 137-amino-acid polypeptide reads, in one-letter code: Ribonuclease P protein component (137 aa).

It belongs to the RnpA family. Consists of a catalytic RNA component (M1 or rnpB) and a protein subunit.

The enzyme catalyses Endonucleolytic cleavage of RNA, removing 5'-extranucleotides from tRNA precursor.. Functionally, RNaseP catalyzes the removal of the 5'-leader sequence from pre-tRNA to produce the mature 5'-terminus. It can also cleave other RNA substrates such as 4.5S RNA. The protein component plays an auxiliary but essential role in vivo by binding to the 5'-leader sequence and broadening the substrate specificity of the ribozyme. The sequence is that of Ribonuclease P protein component from Porphyromonas gingivalis (strain ATCC 33277 / DSM 20709 / CIP 103683 / JCM 12257 / NCTC 11834 / 2561).